We begin with the raw amino-acid sequence, 791 residues long: DNA repair and recombination protein RAD54-like (791 aa).

Residues 1 to 20 (MRRSLAPSQRIGQSTASRNA) are compositionally biased toward polar residues. Positions 1 to 53 (MRRSLAPSQRIGQSTASRNAFTPPLLQKKNKRACQKDLRLDTDADEDKERKRF) are disordered. The required for chromatin remodeling, strand pairing activities and coupling of ATPase activity stretch occupies residues 2–9 (RRSLAPSQ). Thr22 carries the post-translational modification Phosphothreonine. The segment covering 34–53 (CQKDLRLDTDADEDKERKRF) has biased composition (basic and acidic residues). In terms of domain architecture, Helicase ATP-binding spans 175-349 (EGKKGDFNGC…FSLVNFVNPE (175 aa)). 188–195 (DEMGLGKT) contacts ATP. The short motif at 300–303 (DEGH) is the DEGH box element. One can recognise a Helicase C-terminal domain in the interval 506-663 (LLDFMLAAIR…NNESSEKHFT (158 aa)). Residues 747 to 791 (KEVVESPESAAAEAESVEEESQPTQRKRPSPPLSDDSADEDFIGF) form a disordered region. The span at 782–791 (DSADEDFIGF) shows a compositional bias: acidic residues.

The protein belongs to the SNF2/RAD54 helicase family. As to quaternary structure, interacts (via N-terminus) with spn-A/Rad51.

It is found in the nucleus. Functionally, involved in mitotic DNA repair and meiotic recombination. Functions in the recombinational DNA repair pathway. Essential for interhomolog gene conversion (GC), but may have a less important role in intersister GC than spn-A/Rad51. In the presence of DNA, spn-A/Rad51 enhances the ATPase activity of okr/Rad54. This Drosophila ananassae (Fruit fly) protein is DNA repair and recombination protein RAD54-like.